A 383-amino-acid polypeptide reads, in one-letter code: Succinate--CoA ligase [ADP-forming] subunit beta (383 aa).

The ATP-grasp domain maps to 9–241; sequence KEVLHKFNVS…YDEEVKEEIE (233 aa). ATP-binding positions include Lys-46, 53–55, Glu-99, Ser-102, and Glu-107; that span reads GRG. Positions 196 and 210 each coordinate Mg(2+). Substrate contacts are provided by residues Asn-261 and 318–320; that span reads GIM.

This sequence belongs to the succinate/malate CoA ligase beta subunit family. Heterotetramer of two alpha and two beta subunits. Requires Mg(2+) as cofactor.

The enzyme catalyses succinate + ATP + CoA = succinyl-CoA + ADP + phosphate. It catalyses the reaction GTP + succinate + CoA = succinyl-CoA + GDP + phosphate. It participates in carbohydrate metabolism; tricarboxylic acid cycle; succinate from succinyl-CoA (ligase route): step 1/1. Its function is as follows. Succinyl-CoA synthetase functions in the citric acid cycle (TCA), coupling the hydrolysis of succinyl-CoA to the synthesis of either ATP or GTP and thus represents the only step of substrate-level phosphorylation in the TCA. The beta subunit provides nucleotide specificity of the enzyme and binds the substrate succinate, while the binding sites for coenzyme A and phosphate are found in the alpha subunit. The sequence is that of Succinate--CoA ligase [ADP-forming] subunit beta from Wolbachia sp. subsp. Drosophila simulans (strain wRi).